A 494-amino-acid polypeptide reads, in one-letter code: Adenosylhomocysteinase (494 aa).

Residues T72, D155, and E217 each contribute to the substrate site. Residue 218–220 (TTT) coordinates NAD(+). Residues K247 and D251 each coordinate substrate. Residues N252, 281–286 (GYGDVG), E304, N339, 360–362 (IGH), and N408 each bind NAD(+).

Belongs to the adenosylhomocysteinase family. NAD(+) serves as cofactor.

Its subcellular location is the cytoplasm. The enzyme catalyses S-adenosyl-L-homocysteine + H2O = L-homocysteine + adenosine. Its pathway is amino-acid biosynthesis; L-homocysteine biosynthesis; L-homocysteine from S-adenosyl-L-homocysteine: step 1/1. Its function is as follows. May play a key role in the regulation of the intracellular concentration of adenosylhomocysteine. The sequence is that of Adenosylhomocysteinase from Nocardia farcinica (strain IFM 10152).